An 868-amino-acid chain; its full sequence is mRNA-capping enzyme (868 aa).

K282 (N6-GMP-lysine intermediate) is an active-site residue. Residues G594 to N868 enclose the mRNA cap 0 methyltransferase domain. S-adenosyl-L-methionine-binding positions include K607, G624, D646, and L710 to I712.

The protein in the N-terminal section; belongs to the dsDNA virus mRNA guanylyltransferase family. It in the C-terminal section; belongs to the class I-like SAM-binding methyltransferase superfamily. mRNA cap 0 methyltransferase family. In terms of assembly, part of the viral DNA-directed RNA polymerase that consists of 8 polII-like subunits (RPB1, RPB2, RPB3, RPB5, RPB6, RPB7, RPB9, RPB10), a capping enzyme and a termination factor.

It localises to the virion. It catalyses the reaction a 5'-end triphospho-ribonucleoside in mRNA + H2O = a 5'-end diphospho-ribonucleoside in mRNA + phosphate + H(+). The enzyme catalyses a 5'-end diphospho-ribonucleoside in mRNA + GTP + H(+) = a 5'-end (5'-triphosphoguanosine)-ribonucleoside in mRNA + diphosphate. It carries out the reaction a 5'-end (5'-triphosphoguanosine)-ribonucleoside in mRNA + S-adenosyl-L-methionine = a 5'-end (N(7)-methyl 5'-triphosphoguanosine)-ribonucleoside in mRNA + S-adenosyl-L-homocysteine. It functions in the pathway mRNA processing; mRNA capping. Functionally, probably catalyzes the second reaction in the mRNA cap formation pathway. Forms a covalent complex with GTP. The sequence is that of mRNA-capping enzyme from Ornithodoros (relapsing fever ticks).